The chain runs to 298 residues: tRNA pseudouridine synthase B (298 aa).

Asp-39 acts as the Nucleophile in catalysis.

The protein belongs to the pseudouridine synthase TruB family. Type 1 subfamily.

The catalysed reaction is uridine(55) in tRNA = pseudouridine(55) in tRNA. In terms of biological role, responsible for synthesis of pseudouridine from uracil-55 in the psi GC loop of transfer RNAs. The sequence is that of tRNA pseudouridine synthase B from Lactobacillus delbrueckii subsp. bulgaricus (strain ATCC BAA-365 / Lb-18).